The chain runs to 562 residues: Transcriptional adapter 2A (562 aa).

Residues 91–146 form a ZZ-type zinc finger; it reads KDANRCATCRCSLTEPYIKCSECLDTLLCLQCFSRGKEAFSHRNNHAYIIVRDNIQ. The Zn(2+) site is built by Cys-96, Cys-99, Cys-110, Cys-113, Cys-119, Cys-122, His-132, and His-136. Residues 154–198 enclose the SANT domain; the sequence is WTARDERILLKTLRTHGYGNWEAVSQALDQRHEPAEVRRHYHDCY. An SWIRM domain is found at 471-562; the sequence is CLTPTEYNFS…GHISRPPSYG (92 aa).

In terms of assembly, component of the Ada2a-containing (ATAC) complex composed of at least Ada2a, Atac1, Hcf, Ada3, Gcn5, Mocs2B, Charac-14, Atac3, Atac2, NC2beta and wds. Component of a complex that does not include Gcn5 or Ada3.

The protein resides in the nucleus. It localises to the chromosome. Component of the histone acetyltransferase (HAT) complex ATAC; predominantly involved in acetylation of histone H4, including at Lys-6 (H4K5ac) and Lys-13 (H4K12ac). May be part of several different complexes, including Gcn5-independent complexes involved in RNA polymerase II-dependent transcription. The chain is Transcriptional adapter 2A from Drosophila melanogaster (Fruit fly).